A 548-amino-acid chain; its full sequence is Probable malate:quinone oxidoreductase (548 aa).

Positions 521-548 are disordered; it reads DKPQAADSTPKPQLKPQPVQKEVADIAL. Low complexity predominate over residues 530 to 541; the sequence is PKPQLKPQPVQK.

Belongs to the MQO family. Requires FAD as cofactor.

The enzyme catalyses (S)-malate + a quinone = a quinol + oxaloacetate. The protein operates within carbohydrate metabolism; tricarboxylic acid cycle; oxaloacetate from (S)-malate (quinone route): step 1/1. The polypeptide is Probable malate:quinone oxidoreductase (Escherichia coli (strain UTI89 / UPEC)).